The following is a 131-amino-acid chain: Guanyl-specific ribonuclease F1 (131 aa).

The first 25 residues, 1-25 (MLFFKSIASLAALVSLAVASPIESR), serve as a signal peptide directing secretion. Q26 bears the Pyrrolidone carboxylic acid mark. Intrachain disulfides connect C31/C127 and C49/C108. Residue H65 is part of the active site. E83 (proton acceptor) is an active-site residue. H116 (proton donor) is an active-site residue.

It belongs to the ribonuclease N1/T1 family.

It catalyses the reaction [RNA] containing guanosine + H2O = an [RNA fragment]-3'-guanosine-3'-phosphate + a 5'-hydroxy-ribonucleotide-3'-[RNA fragment].. The sequence is that of Guanyl-specific ribonuclease F1 from Fusarium fujikuroi (Bakanae and foot rot disease fungus).